We begin with the raw amino-acid sequence, 495 residues long: Bifunctional protein GlmU (495 aa).

The tract at residues 1-241 is pyrophosphorylase; the sequence is MTFPGDTAVL…SALVAGVNNR (241 aa). Residues 12-15, lysine 26, glutamine 83, 88-89, 112-114, glycine 151, glutamate 166, asparagine 181, and asparagine 239 contribute to the UDP-N-acetyl-alpha-D-glucosamine site; these read LAAG, GT, and SGD. Aspartate 114 lines the Mg(2+) pocket. Asparagine 239 contributes to the Mg(2+) binding site. Positions 242–262 are linker; sequence VQLAELASELNRRVVAAHQLA. The tract at residues 263 to 495 is N-acetyltransferase; sequence GVTVVDPATT…TQPPDADQTP (233 aa). Residues arginine 344 and lysine 362 each contribute to the UDP-N-acetyl-alpha-D-glucosamine site. The active-site Proton acceptor is the histidine 374. The UDP-N-acetyl-alpha-D-glucosamine site is built by tyrosine 377 and asparagine 388. Residues alanine 391, 397-398, serine 416, and alanine 434 each bind acetyl-CoA; that span reads NY. The disordered stretch occupies residues 457–495; that stretch reads IENWVQRKRPGSPAAQASKRASEMACQQPTQPPDADQTP. Low complexity predominate over residues 483-495; it reads QQPTQPPDADQTP.

It in the N-terminal section; belongs to the N-acetylglucosamine-1-phosphate uridyltransferase family. This sequence in the C-terminal section; belongs to the transferase hexapeptide repeat family. As to quaternary structure, homotrimer. The cofactor is Mg(2+).

It localises to the cytoplasm. The catalysed reaction is alpha-D-glucosamine 1-phosphate + acetyl-CoA = N-acetyl-alpha-D-glucosamine 1-phosphate + CoA + H(+). It catalyses the reaction N-acetyl-alpha-D-glucosamine 1-phosphate + UTP + H(+) = UDP-N-acetyl-alpha-D-glucosamine + diphosphate. Its pathway is nucleotide-sugar biosynthesis; UDP-N-acetyl-alpha-D-glucosamine biosynthesis; N-acetyl-alpha-D-glucosamine 1-phosphate from alpha-D-glucosamine 6-phosphate (route II): step 2/2. It functions in the pathway nucleotide-sugar biosynthesis; UDP-N-acetyl-alpha-D-glucosamine biosynthesis; UDP-N-acetyl-alpha-D-glucosamine from N-acetyl-alpha-D-glucosamine 1-phosphate: step 1/1. The protein operates within bacterial outer membrane biogenesis; LPS lipid A biosynthesis. Its function is as follows. Catalyzes the last two sequential reactions in the de novo biosynthetic pathway for UDP-N-acetylglucosamine (UDP-GlcNAc). The C-terminal domain catalyzes the transfer of acetyl group from acetyl coenzyme A to glucosamine-1-phosphate (GlcN-1-P) to produce N-acetylglucosamine-1-phosphate (GlcNAc-1-P), which is converted into UDP-GlcNAc by the transfer of uridine 5-monophosphate (from uridine 5-triphosphate), a reaction catalyzed by the N-terminal domain. The chain is Bifunctional protein GlmU from Mycobacterium tuberculosis (strain ATCC 25177 / H37Ra).